The primary structure comprises 357 residues: Protein RecA (357 aa).

G67–T74 is a binding site for ATP. The segment at N333–F357 is disordered. The segment covering A348–F357 has biased composition (acidic residues).

The protein belongs to the RecA family.

The protein resides in the cytoplasm. In terms of biological role, can catalyze the hydrolysis of ATP in the presence of single-stranded DNA, the ATP-dependent uptake of single-stranded DNA by duplex DNA, and the ATP-dependent hybridization of homologous single-stranded DNAs. It interacts with LexA causing its activation and leading to its autocatalytic cleavage. In Pectobacterium carotovorum subsp. carotovorum (strain PC1), this protein is Protein RecA.